Consider the following 153-residue polypeptide: NADH dehydrogenase [ubiquinone] 1 beta subcomplex subunit 11, mitochondrial (153 aa).

The transit peptide at 1 to 29 (MAAGLFGLSARRLLAAAATRGLPAARVRW) directs the protein to the mitochondrion. A disordered region spans residues 40–76 (PSAVAGKRPPEPTTPWQEDPEPEDENLYEKNPDSHGY). The segment covering 66–76 (LYEKNPDSHGY) has biased composition (basic and acidic residues). Residues 89–109 (LVFFFGVSIILVLGSTFVAYL) form a helical membrane-spanning segment.

This sequence belongs to the complex I NDUFB11 subunit family. Complex I is composed of 45 different subunits. Interacts with BCAP31. In terms of tissue distribution, ubiquitous.

It is found in the mitochondrion inner membrane. Its function is as follows. Accessory subunit of the mitochondrial membrane respiratory chain NADH dehydrogenase (Complex I), that is believed not to be involved in catalysis. Complex I functions in the transfer of electrons from NADH to the respiratory chain. The immediate electron acceptor for the enzyme is believed to be ubiquinone. The protein is NADH dehydrogenase [ubiquinone] 1 beta subcomplex subunit 11, mitochondrial (NDUFB11) of Homo sapiens (Human).